The chain runs to 489 residues: 3-octaprenyl-4-hydroxybenzoate carboxy-lyase (489 aa).

Asparagine 172 contributes to the Mn(2+) binding site. Prenylated FMN-binding positions include 175–177 (VYR), 189–191 (RWL), and 194–195 (RG). Glutamate 240 lines the Mn(2+) pocket. The Proton donor role is filled by aspartate 288.

It belongs to the UbiD family. As to quaternary structure, homohexamer. Requires prenylated FMN as cofactor. Mn(2+) serves as cofactor.

Its subcellular location is the cell membrane. The catalysed reaction is a 4-hydroxy-3-(all-trans-polyprenyl)benzoate + H(+) = a 2-(all-trans-polyprenyl)phenol + CO2. It participates in cofactor biosynthesis; ubiquinone biosynthesis. Functionally, catalyzes the decarboxylation of 3-octaprenyl-4-hydroxy benzoate to 2-octaprenylphenol, an intermediate step in ubiquinone biosynthesis. The polypeptide is 3-octaprenyl-4-hydroxybenzoate carboxy-lyase (Wigglesworthia glossinidia brevipalpis).